The sequence spans 302 residues: GTPase Era (302 aa).

The 169-residue stretch at 9–177 folds into the Era-type G domain; that stretch reads YCGFIAIVGR…EKIVRQSLRE (169 aa). The interval 17–24 is G1; sequence GRPNVGKS. GTP is bound at residue 17–24; it reads GRPNVGKS. The tract at residues 43-47 is G2; sequence QTTRH. The tract at residues 64-67 is G3; sequence DTPG. Residues 64-68 and 126-129 each bind GTP; these read DTPGL and NKVD. The segment at 126–129 is G4; sequence NKVD. The tract at residues 156–158 is G5; that stretch reads ISA. The region spanning 208 to 285 is the KH type-2 domain; it reads TGEELPYSVT…HLELWVKVKS (78 aa).

Belongs to the TRAFAC class TrmE-Era-EngA-EngB-Septin-like GTPase superfamily. Era GTPase family. Monomer.

It is found in the cytoplasm. The protein resides in the cell inner membrane. Its function is as follows. An essential GTPase that binds both GDP and GTP, with rapid nucleotide exchange. Plays a role in 16S rRNA processing and 30S ribosomal subunit biogenesis and possibly also in cell cycle regulation and energy metabolism. The chain is GTPase Era from Haemophilus influenzae (strain PittGG).